Reading from the N-terminus, the 71-residue chain is DNA-directed RNA polymerase subunit Rpo10 (71 aa).

Residues Cys-6, Cys-9, Cys-52, and Cys-53 each coordinate Zn(2+).

This sequence belongs to the archaeal Rpo10/eukaryotic RPB10 RNA polymerase subunit family. In terms of assembly, part of the RNA polymerase complex. The cofactor is Zn(2+).

It localises to the cytoplasm. It carries out the reaction RNA(n) + a ribonucleoside 5'-triphosphate = RNA(n+1) + diphosphate. Functionally, DNA-dependent RNA polymerase (RNAP) catalyzes the transcription of DNA into RNA using the four ribonucleoside triphosphates as substrates. In Methanocella arvoryzae (strain DSM 22066 / NBRC 105507 / MRE50), this protein is DNA-directed RNA polymerase subunit Rpo10.